We begin with the raw amino-acid sequence, 322 residues long: tRNA uridine(34) hydroxylase (322 aa).

A Rhodanese domain is found at 125 to 219; it reads QDPNTIVIDA…YGKDPEVQGK (95 aa). Cysteine 179 functions as the Cysteine persulfide intermediate in the catalytic mechanism.

Belongs to the TrhO family.

It carries out the reaction uridine(34) in tRNA + AH2 + O2 = 5-hydroxyuridine(34) in tRNA + A + H2O. Functionally, catalyzes oxygen-dependent 5-hydroxyuridine (ho5U) modification at position 34 in tRNAs. This is tRNA uridine(34) hydroxylase from Bacillus subtilis (strain 168).